Reading from the N-terminus, the 550-residue chain is Chaperonin GroEL 1 (550 aa).

Residues 29–32 (TIGP), 86–90 (DGTTT), Gly413, 477–479 (NAA), and Asp493 contribute to the ATP site. The disordered stretch occupies residues 524–550 (AVSDGDHGHSHGHGHSHGHSHPQGPGF). Residues 533–543 (SHGHGHSHGHS) show a composition bias toward basic residues.

The protein belongs to the chaperonin (HSP60) family. In terms of assembly, forms a cylinder of 14 subunits composed of two heptameric rings stacked back-to-back. Interacts with the co-chaperonin GroES.

The protein localises to the cytoplasm. It catalyses the reaction ATP + H2O + a folded polypeptide = ADP + phosphate + an unfolded polypeptide.. Together with its co-chaperonin GroES, plays an essential role in assisting protein folding. The GroEL-GroES system forms a nano-cage that allows encapsulation of the non-native substrate proteins and provides a physical environment optimized to promote and accelerate protein folding. In Frankia alni (strain DSM 45986 / CECT 9034 / ACN14a), this protein is Chaperonin GroEL 1.